The primary structure comprises 115 residues: Large ribosomal subunit protein bL21 (115 aa).

This sequence belongs to the bacterial ribosomal protein bL21 family. In terms of assembly, part of the 50S ribosomal subunit. Contacts protein L20.

Functionally, this protein binds to 23S rRNA in the presence of protein L20. In Coxiella burnetii (strain RSA 331 / Henzerling II), this protein is Large ribosomal subunit protein bL21.